The chain runs to 196 residues: Anthranilate synthase component 2 (196 aa).

One can recognise a Glutamine amidotransferase type-1 domain in the interval 3–196 (NILLLDNFDS…INWASLKYKG (194 aa)). 57–59 (GPS) lines the L-glutamine pocket. Catalysis depends on Cys-84, which acts as the Nucleophile; for GATase activity. Residues Gln-88 and 134-135 (SL) contribute to the L-glutamine site. Active-site for GATase activity residues include His-170 and Glu-172.

As to quaternary structure, heterotetramer consisting of two non-identical subunits: a beta subunit (TrpG) and a large alpha subunit (TrpE).

It carries out the reaction chorismate + L-glutamine = anthranilate + pyruvate + L-glutamate + H(+). It participates in amino-acid biosynthesis; L-tryptophan biosynthesis; L-tryptophan from chorismate: step 1/5. Functionally, part of a heterotetrameric complex that catalyzes the two-step biosynthesis of anthranilate, an intermediate in the biosynthesis of L-tryptophan. In the first step, the glutamine-binding beta subunit (TrpG) of anthranilate synthase (AS) provides the glutamine amidotransferase activity which generates ammonia as a substrate that, along with chorismate, is used in the second step, catalyzed by the large alpha subunit of AS (TrpE) to produce anthranilate. In the absence of TrpG, TrpE can synthesize anthranilate directly from chorismate and high concentrations of ammonia. This Buchnera aphidicola subsp. Schizaphis graminum (strain Sg) protein is Anthranilate synthase component 2 (trpG).